The following is a 454-amino-acid chain: tRNA modification GTPase MnmE (454 aa).

(6S)-5-formyl-5,6,7,8-tetrahydrofolate-binding residues include Arg23, Glu80, and Lys120. Positions 216–377 (GMKVVIAGRP…LRNNLKQSMG (162 aa)) constitute a TrmE-type G domain. Asn226 serves as a coordination point for K(+). GTP is bound by residues 226–231 (NAGKSS), 245–251 (TDIAGTT), 270–273 (DTAG), 335–338 (NKAD), and 358–360 (SAR). Residue Ser230 coordinates Mg(2+). K(+)-binding residues include Thr245, Ile247, and Thr250. Mg(2+) is bound at residue Thr251. Lys454 is a (6S)-5-formyl-5,6,7,8-tetrahydrofolate binding site.

Belongs to the TRAFAC class TrmE-Era-EngA-EngB-Septin-like GTPase superfamily. TrmE GTPase family. In terms of assembly, homodimer. Heterotetramer of two MnmE and two MnmG subunits. K(+) is required as a cofactor.

It localises to the cytoplasm. In terms of biological role, exhibits a very high intrinsic GTPase hydrolysis rate. Involved in the addition of a carboxymethylaminomethyl (cmnm) group at the wobble position (U34) of certain tRNAs, forming tRNA-cmnm(5)s(2)U34. In Salmonella paratyphi A (strain AKU_12601), this protein is tRNA modification GTPase MnmE.